Reading from the N-terminus, the 294-residue chain is Cytidine deaminase (294 aa).

CMP/dCMP-type deaminase domains follow at residues 48-168 (DEDA…FGPK) and 186-294 (VSGD…VLLG). A substrate-binding site is contributed by 89–91 (NME). His-102 contacts Zn(2+). Residue Glu-104 is the Proton donor of the active site. Zn(2+) contacts are provided by Cys-129 and Cys-132.

This sequence belongs to the cytidine and deoxycytidylate deaminase family. As to quaternary structure, homodimer. The cofactor is Zn(2+).

It carries out the reaction cytidine + H2O + H(+) = uridine + NH4(+). The catalysed reaction is 2'-deoxycytidine + H2O + H(+) = 2'-deoxyuridine + NH4(+). Functionally, this enzyme scavenges exogenous and endogenous cytidine and 2'-deoxycytidine for UMP synthesis. This chain is Cytidine deaminase, found in Klebsiella pneumoniae subsp. pneumoniae (strain ATCC 700721 / MGH 78578).